The sequence spans 377 residues: Succinyl-diaminopimelate desuccinylase (377 aa).

H68 is a binding site for Zn(2+). The active site involves D70. D101 contributes to the Zn(2+) binding site. The active-site Proton acceptor is the E135. The Zn(2+) site is built by E136, E164, and H350.

It belongs to the peptidase M20A family. DapE subfamily. In terms of assembly, homodimer. Zn(2+) serves as cofactor. Requires Co(2+) as cofactor.

The enzyme catalyses N-succinyl-(2S,6S)-2,6-diaminopimelate + H2O = (2S,6S)-2,6-diaminopimelate + succinate. It functions in the pathway amino-acid biosynthesis; L-lysine biosynthesis via DAP pathway; LL-2,6-diaminopimelate from (S)-tetrahydrodipicolinate (succinylase route): step 3/3. Its function is as follows. Catalyzes the hydrolysis of N-succinyl-L,L-diaminopimelic acid (SDAP), forming succinate and LL-2,6-diaminopimelate (DAP), an intermediate involved in the bacterial biosynthesis of lysine and meso-diaminopimelic acid, an essential component of bacterial cell walls. The chain is Succinyl-diaminopimelate desuccinylase from Psychromonas ingrahamii (strain DSM 17664 / CCUG 51855 / 37).